The primary structure comprises 943 residues: Isoleucine--tRNA ligase (943 aa).

The 'HIGH' region motif lies at 59–69; that stretch reads PYANGRIHLGH. Glutamate 577 provides a ligand contact to L-isoleucyl-5'-AMP. Residues 618 to 622 carry the 'KMSKS' region motif; the sequence is KMSKS. Lysine 621 contacts ATP. Zn(2+) contacts are provided by cysteine 906, cysteine 909, cysteine 926, and cysteine 929.

It belongs to the class-I aminoacyl-tRNA synthetase family. IleS type 1 subfamily. As to quaternary structure, monomer. It depends on Zn(2+) as a cofactor.

Its subcellular location is the cytoplasm. The enzyme catalyses tRNA(Ile) + L-isoleucine + ATP = L-isoleucyl-tRNA(Ile) + AMP + diphosphate. In terms of biological role, catalyzes the attachment of isoleucine to tRNA(Ile). As IleRS can inadvertently accommodate and process structurally similar amino acids such as valine, to avoid such errors it has two additional distinct tRNA(Ile)-dependent editing activities. One activity is designated as 'pretransfer' editing and involves the hydrolysis of activated Val-AMP. The other activity is designated 'posttransfer' editing and involves deacylation of mischarged Val-tRNA(Ile). The protein is Isoleucine--tRNA ligase of Stenotrophomonas maltophilia (strain R551-3).